Here is a 729-residue protein sequence, read N- to C-terminus: Putative cyclic nucleotide-gated ion channel 19 (729 aa).

Over 1–172 the chain is Cytoplasmic; that stretch reads MAHTRTFTSR…SKFVQVWTRV (172 aa). Residues 52–82 are disordered; the sequence is SGPIHSTRRTEPLFSPSPQESPDSSSTVDVP. Positions 67–81 are enriched in low complexity; sequence PSPQESPDSSSTVDV. A helical transmembrane segment spans residues 173–193; sequence LAFSSLVAIFIDPLFFFLLLI. Residues 194–208 lie on the Extracellular side of the membrane; it reads QQDNKCIAIDWRATK. Residues 209-229 traverse the membrane as a helical segment; sequence VLVSLRSITDLIFFINILLQF. Residues 230 to 261 are Cytoplasmic-facing; that stretch reads RLAYVAPESRIVGAGQLVDHPRKIARHYFRGK. The helical transmembrane segment at 262–282 threads the bilayer; that stretch reads FLLDMFIVFPIPQIMILRIIP. Residues 283–295 lie on the Extracellular side of the membrane; sequence LHLGTRREESEKQ. A helical transmembrane segment spans residues 296 to 316; the sequence is ILRATVLFQYIPKLYRLLPLL. The Cytoplasmic segment spans residues 317-332; that stretch reads AGQTSTGFIFESAWAN. A helical membrane pass occupies residues 333 to 353; that stretch reads FVINLLTFMLAGHAVGSCWYL. Residues 354–451 lie on the Extracellular side of the membrane; it reads SALQRVKKCM…STLAGNLSPS (98 aa). The helical transmembrane segment at 452–472 threads the bilayer; sequence YSVGEVFFTMGIIGLGLLLFA. Residues 473 to 729 are Cytoplasmic-facing; it reads RLIGNMHNFL…LNTAHSNSNR (257 aa). Residues 560–677 and Glu-625 each bind a nucleoside 3',5'-cyclic phosphate; that span reads IFSL…VTSL. A calmodulin-binding region spans residues 678–694; that stretch reads FSRFLRSHRVQGAIRYE. In terms of domain architecture, IQ spans 699-728; that stretch reads RLRAAMQIQVAWRYRKRQLQRLNTAHSNSN.

It belongs to the cyclic nucleotide-gated cation channel (TC 1.A.1.5) family. In terms of assembly, homotetramer or heterotetramer.

The protein localises to the cell membrane. Functionally, putative cyclic nucleotide-gated ion channel. The sequence is that of Putative cyclic nucleotide-gated ion channel 19 (CNGC19) from Arabidopsis thaliana (Mouse-ear cress).